A 106-amino-acid polypeptide reads, in one-letter code: Large ribosomal subunit protein uL24 (106 aa).

The tract at residues 1-20 is disordered; sequence MNKRAKSKNREPLRKSPVKR. Residues 8–20 are compositionally biased toward basic and acidic residues; it reads KNREPLRKSPVKR.

This sequence belongs to the universal ribosomal protein uL24 family. Part of the 50S ribosomal subunit.

Functionally, one of two assembly initiator proteins, it binds directly to the 5'-end of the 23S rRNA, where it nucleates assembly of the 50S subunit. Its function is as follows. One of the proteins that surrounds the polypeptide exit tunnel on the outside of the subunit. The sequence is that of Large ribosomal subunit protein uL24 from Methylacidiphilum infernorum (isolate V4) (Methylokorus infernorum (strain V4)).